A 469-amino-acid polypeptide reads, in one-letter code: MNPNQKIITIGSVSLTIATVCFLMQIAILVTTVTLHFKQHECDSPASNQVMPCEPIIIERNITEIVYLNNTTIEKEICPKVVEYRNWSKPQCQITGFAPFSKDNSIRLSAGGDIWVTREPYVSCDPVKCYQFALGQGTTLDNKHSNDTVHDRIPHRTLLMNELGVPFHLGTRQVCIAWSSSSCHDGKAWLHVCITGDDKNATASFIYDGRLVDSIGSWSQNILRTQESECVCINGTCTVVMTDGSASGRADTRILFIEEGKIVHISPLAGSAQHVEECSCYPRYPGVRCICRDNWKGSNRPVVDINMEDYSIDSSYVCSGLVGDTPRNDDRSSNSNCRNPNNERGTQGVKGWAFDNGNDLWMGRTISKDLRSGYETFKVIGGWSTPNSKSQINRQVIVDSDNRSGYSGIFSVEGKSCINRCFYVELIRGRKQETRVWWTSNSIVVFCGTSGTYGTGSWPDGANINFMPI.

Over 1–9 the chain is Intravirion; that stretch reads MNPNQKIIT. The chain crosses the membrane as a helical span at residues 10-30; the sequence is IGSVSLTIATVCFLMQIAILV. The segment at 11–33 is involved in apical transport and lipid raft association; that stretch reads GSVSLTIATVCFLMQIAILVTTV. Topologically, residues 31 to 469 are virion surface; sequence TTVTLHFKQH…DGANINFMPI (439 aa). The segment at 36-88 is hypervariable stalk region; sequence HFKQHECDSPASNQVMPCEPIIIERNITEIVYLNNTTIEKEICPKVVEYRNWS. 4 N-linked (GlcNAc...) asparagine; by host glycosylation sites follow: N61, N69, N70, and N86. Residues 91-469 form a head of neuraminidase region; that stretch reads QCQITGFAPF…DGANINFMPI (379 aa). Disulfide bonds link C92-C417, C124-C129, C175-C193, C183-C230, C232-C237, C278-C291, C280-C289, C318-C337, and C421-C447. R118 lines the substrate pocket. N-linked (GlcNAc...) asparagine; by host glycosylation occurs at N146. D151 acts as the Proton donor/acceptor in catalysis. R152 serves as a coordination point for substrate. N200 and N234 each carry an N-linked (GlcNAc...) asparagine; by host glycan. Position 276–277 (276–277) interacts with substrate; that stretch reads EE. R292 is a substrate binding site. Ca(2+)-binding residues include D293, G297, and D324. The interval 324–349 is disordered; the sequence is DTPRNDDRSSNSNCRNPNNERGTQGV. The span at 333-342 shows a compositional bias: low complexity; the sequence is SNSNCRNPNN. Ca(2+)-binding residues include G345, T346, and Q347. Residue R371 participates in substrate binding. A glycan (N-linked (GlcNAc...) asparagine; by host) is linked at N402. Y406 serves as the catalytic Nucleophile.

Belongs to the glycosyl hydrolase 34 family. As to quaternary structure, homotetramer. Ca(2+) serves as cofactor. Post-translationally, N-glycosylated.

It localises to the virion membrane. The protein localises to the host apical cell membrane. The enzyme catalyses Hydrolysis of alpha-(2-&gt;3)-, alpha-(2-&gt;6)-, alpha-(2-&gt;8)- glycosidic linkages of terminal sialic acid residues in oligosaccharides, glycoproteins, glycolipids, colominic acid and synthetic substrates.. Its activity is regulated as follows. Inhibited by the neuraminidase inhibitors zanamivir (Relenza) and oseltamivir (Tamiflu). These drugs interfere with the release of progeny virus from infected cells and are effective against all influenza strains. Resistance to neuraminidase inhibitors is quite rare. Its function is as follows. Catalyzes the removal of terminal sialic acid residues from viral and cellular glycoconjugates. Cleaves off the terminal sialic acids on the glycosylated HA during virus budding to facilitate virus release. Additionally helps virus spread through the circulation by further removing sialic acids from the cell surface. These cleavages prevent self-aggregation and ensure the efficient spread of the progeny virus from cell to cell. Otherwise, infection would be limited to one round of replication. Described as a receptor-destroying enzyme because it cleaves a terminal sialic acid from the cellular receptors. May facilitate viral invasion of the upper airways by cleaving the sialic acid moieties on the mucin of the airway epithelial cells. Likely to plays a role in the budding process through its association with lipid rafts during intracellular transport. May additionally display a raft-association independent effect on budding. Plays a role in the determination of host range restriction on replication and virulence. Sialidase activity in late endosome/lysosome traffic seems to enhance virus replication. In Aves (Human), this protein is Neuraminidase.